The following is a 338-amino-acid chain: Lipoate-protein ligase A (338 aa).

In terms of domain architecture, BPL/LPL catalytic spans 29-216 (PATQRVLFLW…AFFAHYGERV (188 aa)). ATP-binding positions include Arg-71, 76-79 (GAVF), and Lys-134. A (R)-lipoate-binding site is contributed by Lys-134.

This sequence belongs to the LplA family. As to quaternary structure, monomer.

It is found in the cytoplasm. The catalysed reaction is L-lysyl-[lipoyl-carrier protein] + (R)-lipoate + ATP = N(6)-[(R)-lipoyl]-L-lysyl-[lipoyl-carrier protein] + AMP + diphosphate + H(+). It functions in the pathway protein modification; protein lipoylation via exogenous pathway; protein N(6)-(lipoyl)lysine from lipoate: step 1/2. It participates in protein modification; protein lipoylation via exogenous pathway; protein N(6)-(lipoyl)lysine from lipoate: step 2/2. Its function is as follows. Catalyzes both the ATP-dependent activation of exogenously supplied lipoate to lipoyl-AMP and the transfer of the activated lipoyl onto the lipoyl domains of lipoate-dependent enzymes. This chain is Lipoate-protein ligase A, found in Salmonella typhimurium (strain LT2 / SGSC1412 / ATCC 700720).